We begin with the raw amino-acid sequence, 336 residues long: Ketol-acid reductoisomerase (NADP(+)) (336 aa).

Residues 1–181 (MKVYYDQDAD…GGGRSGIIET (181 aa)) form the KARI N-terminal Rossmann domain. Residues 24 to 27 (YGSQ), Arg-47, Ser-50, and Ser-52 contribute to the NADP(+) site. The active site involves His-107. Residue Gly-133 participates in NADP(+) binding. Residues 182 to 327 (SFREETETDL…ERLRGMMPWI (146 aa)) enclose the KARI C-terminal knotted domain. Mg(2+) is bound by residues Asp-190, Glu-194, Glu-226, and Glu-230. Ser-251 contacts substrate.

The protein belongs to the ketol-acid reductoisomerase family. The cofactor is Mg(2+).

It catalyses the reaction (2R)-2,3-dihydroxy-3-methylbutanoate + NADP(+) = (2S)-2-acetolactate + NADPH + H(+). It carries out the reaction (2R,3R)-2,3-dihydroxy-3-methylpentanoate + NADP(+) = (S)-2-ethyl-2-hydroxy-3-oxobutanoate + NADPH + H(+). It functions in the pathway amino-acid biosynthesis; L-isoleucine biosynthesis; L-isoleucine from 2-oxobutanoate: step 2/4. Its pathway is amino-acid biosynthesis; L-valine biosynthesis; L-valine from pyruvate: step 2/4. Its function is as follows. Involved in the biosynthesis of branched-chain amino acids (BCAA). Catalyzes an alkyl-migration followed by a ketol-acid reduction of (S)-2-acetolactate (S2AL) to yield (R)-2,3-dihydroxy-isovalerate. In the isomerase reaction, S2AL is rearranged via a Mg-dependent methyl migration to produce 3-hydroxy-3-methyl-2-ketobutyrate (HMKB). In the reductase reaction, this 2-ketoacid undergoes a metal-dependent reduction by NADPH to yield (R)-2,3-dihydroxy-isovalerate. This chain is Ketol-acid reductoisomerase (NADP(+)), found in Halorhodospira halophila (strain DSM 244 / SL1) (Ectothiorhodospira halophila (strain DSM 244 / SL1)).